We begin with the raw amino-acid sequence, 404 residues long: tRNA-specific 2-thiouridylase MnmA (404 aa).

Residues 42–49 (GLSGGVDS) and leucine 68 contribute to the ATP site. Cysteine 129 serves as the catalytic Nucleophile. Cysteine 129 and cysteine 239 are disulfide-bonded. Residue glycine 154 participates in ATP binding. The interaction with tRNA stretch occupies residues 189-191 (KDQ). Catalysis depends on cysteine 239, which acts as the Cysteine persulfide intermediate. The interaction with tRNA stretch occupies residues 344–345 (RY).

Belongs to the MnmA/TRMU family.

The protein resides in the cytoplasm. The enzyme catalyses S-sulfanyl-L-cysteinyl-[protein] + uridine(34) in tRNA + AH2 + ATP = 2-thiouridine(34) in tRNA + L-cysteinyl-[protein] + A + AMP + diphosphate + H(+). Its function is as follows. Catalyzes the 2-thiolation of uridine at the wobble position (U34) of tRNA, leading to the formation of s(2)U34. This Prochlorococcus marinus (strain NATL1A) protein is tRNA-specific 2-thiouridylase MnmA.